The sequence spans 1202 residues: Ribonuclease P protein component, mitochondrial (1202 aa).

The transit peptide at 1 to 122 directs the protein to the mitochondrion; the sequence is MAFKSFIYSK…NNNNNQHRYY (122 aa). A disordered region spans residues 109–134; that stretch reads NYVNNNNNNQHRYYSTGPTLPTNQYD. Polar residues predominate over residues 118–134; the sequence is QHRYYSTGPTLPTNQYD.

As to quaternary structure, consists of an RNA moiety (RPM1) and the protein component (RPM2). Both are necessary for full enzymatic activity.

It is found in the mitochondrion. The enzyme catalyses Endonucleolytic cleavage of RNA, removing 5'-extranucleotides from tRNA precursor.. In terms of biological role, ribonuclease P generates mature tRNA molecules by cleaving their 5'-ends. This chain is Ribonuclease P protein component, mitochondrial (RPM2), found in Saccharomyces cerevisiae (strain ATCC 204508 / S288c) (Baker's yeast).